Consider the following 186-residue polypeptide: NADH-ubiquinone oxidoreductase 17.8 kDa subunit, mitochondrial (186 aa).

The N-terminal 26 residues, 1–26, are a transit peptide targeting the mitochondrion; that stretch reads MSSFRLGVSRVARQVRAPCVRNTRRY. Residues 22–49 form a disordered region; it reads NTRRYASDSHAPADHTHSAAGHGEHHHA. The segment covering 26–49 has biased composition (basic and acidic residues); the sequence is YASDSHAPADHTHSAAGHGEHHHA. Residues 58 to 78 traverse the membrane as a helical segment; sequence LGTAFYVIFGAIPAFGALYYF.

Complex I is composed of about 40 different subunits.

The protein resides in the mitochondrion inner membrane. It catalyses the reaction a ubiquinone + NADH + 5 H(+)(in) = a ubiquinol + NAD(+) + 4 H(+)(out). Transfer of electrons from NADH to the respiratory chain. The immediate electron acceptor for the enzyme is believed to be ubiquinone. This chain is NADH-ubiquinone oxidoreductase 17.8 kDa subunit, mitochondrial (nuo17.8), found in Neurospora crassa (strain ATCC 24698 / 74-OR23-1A / CBS 708.71 / DSM 1257 / FGSC 987).